The primary structure comprises 947 residues: Protein translocase subunit SecA 1 (947 aa).

ATP contacts are provided by residues Gln-83, 101–105, and Asp-490; that span reads GEGKT. Positions 860–947 are disordered; it reads AKAQEQTGQG…KTSKPTRRRG (88 aa). Residues 925–934 are compositionally biased toward basic and acidic residues; it reads TRRERREAAR. Residues 935–947 show a composition bias toward basic residues; the sequence is KQAKTSKPTRRRG.

The protein belongs to the SecA family. As to quaternary structure, monomer and homodimer. Part of the essential Sec protein translocation apparatus which comprises SecA, SecYEG and auxiliary proteins SecDF. Other proteins may also be involved.

It is found in the cell membrane. It localises to the cytoplasm. The catalysed reaction is ATP + H2O + cellular proteinSide 1 = ADP + phosphate + cellular proteinSide 2.. Part of the Sec protein translocase complex. Interacts with the SecYEG preprotein conducting channel. Has a central role in coupling the hydrolysis of ATP to the transfer of proteins into and across the cell membrane, serving as an ATP-driven molecular motor driving the stepwise translocation of polypeptide chains across the membrane. The chain is Protein translocase subunit SecA 1 from Mycobacterium sp. (strain KMS).